The sequence spans 293 residues: Ethanolamine ammonia-lyase small subunit (293 aa).

Residues V207 and E228 each contribute to the adenosylcob(III)alamin site.

Belongs to the EutC family. The basic unit is a heterodimer which dimerizes to form tetramers. The heterotetramers trimerize; 6 large subunits form a core ring with 6 small subunits projecting outwards. It depends on adenosylcob(III)alamin as a cofactor.

It localises to the bacterial microcompartment. It carries out the reaction ethanolamine = acetaldehyde + NH4(+). The protein operates within amine and polyamine degradation; ethanolamine degradation. Catalyzes the deamination of various vicinal amino-alcohols to oxo compounds. Allows this organism to utilize ethanolamine as the sole source of nitrogen and carbon in the presence of external vitamin B12. The polypeptide is Ethanolamine ammonia-lyase small subunit (Listeria monocytogenes serotype 4b (strain CLIP80459)).